The primary structure comprises 329 residues: 3-dehydroquinate synthase (329 aa).

The protein belongs to the archaeal-type DHQ synthase family.

The catalysed reaction is 2-amino-2,3,7-trideoxy-D-lyxo-hept-6-ulosonate + NAD(+) + H2O = 3-dehydroquinate + NH4(+) + NADH + H(+). Catalyzes the oxidative deamination and cyclization of 2-amino-3,7-dideoxy-D-threo-hept-6-ulosonic acid (ADH) to yield 3-dehydroquinate (DHQ), which is fed into the canonical shikimic pathway of aromatic amino acid biosynthesis. The chain is 3-dehydroquinate synthase from Methanoregula boonei (strain DSM 21154 / JCM 14090 / 6A8).